The following is a 37-amino-acid chain: Beta-2-microglobulin (37 aa).

The Ig-like C1-type domain maps to 11–37; sequence GKEDVLICHVSNFHPPDITITLLKNGE.

Belongs to the beta-2-microglobulin family. Heterodimer of an alpha chain and a beta chain. Beta-2-microglobulin is the beta-chain of major histocompatibility complex class I molecules.

The protein resides in the secreted. Component of the class I major histocompatibility complex (MHC). Involved in the presentation of peptide antigens to the immune system. In Oreochromis niloticus (Nile tilapia), this protein is Beta-2-microglobulin (b2m).